Here is a 377-residue protein sequence, read N- to C-terminus: TelA-like protein SSP1345 (377 aa).

Over residues 1–18 (MAREQDSINSHPLDKYID) the composition is skewed to basic and acidic residues. Residues 1-39 (MAREQDSINSHPLDKYIDENSANESEIIKSSSQFSHEDQ) form a disordered region. Positions 20-34 (NSANESEIIKSSSQF) are enriched in polar residues.

It belongs to the TelA family.

The polypeptide is TelA-like protein SSP1345 (Staphylococcus saprophyticus subsp. saprophyticus (strain ATCC 15305 / DSM 20229 / NCIMB 8711 / NCTC 7292 / S-41)).